A 687-amino-acid chain; its full sequence is Leucine-rich repeat and fibronectin type III domain-containing protein 1-like protein (687 aa).

A signal peptide spans 1-17 (MEWLIFSLLLLAVSASG). Residues 18–51 (QLCPKRCMCQNLSPSLAILCAKTGLLFVPTVIDR) enclose the LRRNT domain. The Extracellular segment spans residues 18–527 (QLCPKRCMCQ…LRSHFLGGTM (510 aa)). LRR repeat units follow at residues 52–73 (RTVE…DFAN), 76–97 (SLLH…TFAD), 100–121 (RLRA…HFRG), 124–145 (NLRH…AFDD), 149–170 (TLED…TIGR), 173–194 (NVNT…IFSN), and 197–218 (KLAR…PLFL). The N-linked (GlcNAc...) asparagine glycan is linked to Asn73. Residues 241–287 (NPLHCNCELLWLRRLTREDDLETCASPPDLTAKYFWTIPEEEFICDP) form the LRRCT domain. Positions 287–376 (PPVITRKSPK…STGTVELVVS (90 aa)) constitute an Ig-like domain. A disulfide bridge links Cys309 with Cys358. Residues Asn331, Asn340, Asn346, Asn383, Asn410, and Asn450 are each glycosylated (N-linked (GlcNAc...) asparagine). A disordered region spans residues 384–412 (STNRIREPDPGPSDILTSAKSTSSVSNET). The span at 398–412 (ILTSAKSTSSVSNET) shows a compositional bias: polar residues. The Fibronectin type-III domain occupies 415 to 510 (QERKVVLAEL…VGCVTFVTET (96 aa)). A helical membrane pass occupies residues 528 to 548 (IIIIGGIIVASVLVFIIILMI). The Cytoplasmic segment spans residues 549-687 (RYKVYSQHGA…AQRDWSDFKI (139 aa)). Disordered stretches follow at residues 563–601 (GTAM…GSLG) and 630–687 (EDIV…DFKI). Polar residues-rich tracts occupy residues 565-576 (AMTNVRSQTNGG) and 657-672 (EGTS…SPQV). Residues 673–687 (SDEKKAQRDWSDFKI) show a composition bias toward basic and acidic residues.

It belongs to the LRFN family.

The protein localises to the membrane. The protein resides in the synapse. May be involved in the regulation of excitatory synapses. This chain is Leucine-rich repeat and fibronectin type III domain-containing protein 1-like protein (lrfn1l), found in Danio rerio (Zebrafish).